The following is a 423-amino-acid chain: UPF0597 protein Emin_0811 (423 aa).

It belongs to the UPF0597 family.

This Elusimicrobium minutum (strain Pei191) protein is UPF0597 protein Emin_0811.